The chain runs to 89 residues: Large ribosomal subunit protein bL31B (89 aa).

Belongs to the bacterial ribosomal protein bL31 family. Type B subfamily. In terms of assembly, part of the 50S ribosomal subunit.

The protein is Large ribosomal subunit protein bL31B of Aeromonas hydrophila subsp. hydrophila (strain ATCC 7966 / DSM 30187 / BCRC 13018 / CCUG 14551 / JCM 1027 / KCTC 2358 / NCIMB 9240 / NCTC 8049).